A 393-amino-acid chain; its full sequence is Potassium channel subfamily K member 4 (393 aa).

At 1-3 (MRS) the chain is on the cytoplasmic side. The helical transmembrane segment at 4–24 (TTLLALLALVLLYLVSGALVF) threads the bilayer. The Extracellular portion of the chain corresponds to 25 to 87 (RALEQPHEQQ…NSTSNSSHSA (63 aa)). Residues N78 and N82 are each glycosylated (N-linked (GlcNAc...) asparagine). The segment at residues 88–102 (WDLGSAFFFSGTIIT) is an intramembrane region (helical). The K(+) site is built by T103, I104, G105, and Y106. Residues 103–108 (TIGYGN) form a selectivity filter 1 region. An intramembrane segment occupies 103-109 (TIGYGNV). Over 110–117 (ALRTDAGR) the chain is Extracellular. The chain crosses the membrane as a helical span at residues 118-150 (LFCIFYALVGIPLFGILLAGVGDRLGSSLRHGI). Residues 151-172 (GHIEAIFLKWHVPPELVRVLSA) lie on the Cytoplasmic side of the membrane. The helical transmembrane segment at 173 to 194 (MLFLLIGCLLFVLTPTFVFCYM) threads the bilayer. Residues 195–199 (EDWSK) are Extracellular-facing. The helical intramembrane region spans 200–213 (LEAIYFVIVTLTTV). T212, V213, G214, and F215 together coordinate K(+). The segment at 212–217 (TVGFGD) is selectivity filter 2. Residues 214-219 (GFGDYV) lie within the membrane without spanning it. Over 220-233 (AGADPRQDSPAYQP) the chain is Extracellular. The helical transmembrane segment at 234–260 (LVWFWILLGLAYFASVLTTIGNWLRVV) threads the bilayer. Over 261–393 (SRRTRAEMGG…GRPRDKGVPV (133 aa)) the chain is Cytoplasmic. Positions 285 to 393 (RVTQRAGPAA…GRPRDKGVPV (109 aa)) are disordered. Over residues 319–332 (SPSPPEKAQPPSPP) the composition is skewed to pro residues. Residues 365-384 (PRGRRRPNPPRKPVRPRGPG) are compositionally biased toward basic residues.

This sequence belongs to the two pore domain potassium channel (TC 1.A.1.8) family. Homodimer; disulfide-linked. Forms heterodimers with other 2-pore domain K(+) channel subunits, such as KCNK2 and KCNK10. In terms of processing, N-glycosylated.

It is found in the cell membrane. It localises to the cell projection. The protein localises to the axon. It catalyses the reaction K(+)(in) = K(+)(out). The enzyme catalyses Rb(+)(in) = Rb(+)(out). It carries out the reaction Cs(+)(in) = Cs(+)(out). Activated by mechanical stretch and arachidonic acid. In terms of biological role, k(+) channel that conducts voltage-dependent outward rectifying currents upon membrane depolarization. Voltage sensing is coupled to K(+) electrochemical gradient in an 'ion flux gating' mode where outward but not inward ion flow opens the gate. Converts to voltage-independent 'leak' conductance mode upon stimulation by various stimuli including mechanical membrane stretch, basic pH, heat and lipids. Homo- and heterodimerizes to form functional channels with distinct regulatory and gating properties. At trigeminal A-beta afferent nerves, the heterodimer of KCNK2/TREK-1 and KCNK4/TRAAK is mostly coexpressed at nodes of Ranvier where it conducts voltage-independent mechanosensitive and thermosensitive currents, allowing rapid action potential repolarization, high speed and high frequence saltatory conduction on myelinated nerves to ensure prompt sensory responses. Permeable to other monovalent cations such as Rb(+) and Cs(+). The protein is Potassium channel subfamily K member 4 of Homo sapiens (Human).